A 99-amino-acid polypeptide reads, in one-letter code: High mobility group nucleosome-binding domain-containing protein 3 (99 aa).

Composition is skewed to basic and acidic residues over residues 1–25 (MPKR…EPTR), 39–53 (PEPK…KEPG), and 62–72 (GKKEEKQEAGK). Residues 1-99 (MPKRKSPENT…KTESVDNEGE (99 aa)) form a disordered region. S6 is subject to Phosphoserine. Residue T10 is modified to Phosphothreonine. Phosphoserine is present on residues S78 and S93. The span at 81-93 (GETKAEEAQKTES) shows a compositional bias: basic and acidic residues.

The protein belongs to the HMGN family. Interacts with the ligand binding domain of the thyroid receptor (TR) (in vitro). Requires the presence of thyroid hormone for its interaction. Interacts with transcriptional regulator SEHBP. Interacts with nucleosomes. In terms of tissue distribution, expressed in kidney, lung, pancreas, testis, skeletal muscle, heart, thyroid gland, pituitary gland, prostate and uterus. Low expression in liver, spleen, placenta and ovaries.

It localises to the nucleus. Its function is as follows. Binds to nucleosomes, regulating chromatin structure and consequently, chromatin-dependent processes such as transcription, DNA replication and DNA repair. Affects both insulin and glucagon levels and modulates the expression of pancreatic genes involved in insulin secretion. Regulates the expression of the glucose transporter SLC2A2 by binding specifically to its promoter region and recruiting PDX1 and additional transcription factors. Regulates the expression of SLC6A9, a glycine transporter which regulates the glycine concentration in synaptic junctions in the central nervous system, by binding to its transcription start site. May play a role in ocular development and astrocyte function. The sequence is that of High mobility group nucleosome-binding domain-containing protein 3 (HMGN3) from Homo sapiens (Human).